Here is a 191-residue protein sequence, read N- to C-terminus: dCTP deaminase, dUMP-forming (191 aa).

DCTP-binding positions include 101-106 (KSSLGR), Asp-119, 127-129 (TLE), Gln-148, Tyr-162, and Gln-174. Residue Glu-129 is the Proton donor/acceptor of the active site. A disordered region spans residues 169–191 (NRYQGQRGPTASRSHLNFHRTRI). A compositionally biased stretch (polar residues) spans 171–183 (YQGQRGPTASRSH).

The protein belongs to the dCTP deaminase family. As to quaternary structure, homotrimer.

It carries out the reaction dCTP + 2 H2O = dUMP + NH4(+) + diphosphate. Its pathway is pyrimidine metabolism; dUMP biosynthesis; dUMP from dCTP: step 1/1. Bifunctional enzyme that catalyzes both the deamination of dCTP to dUTP and the hydrolysis of dUTP to dUMP without releasing the toxic dUTP intermediate. In Pseudarthrobacter chlorophenolicus (strain ATCC 700700 / DSM 12829 / CIP 107037 / JCM 12360 / KCTC 9906 / NCIMB 13794 / A6) (Arthrobacter chlorophenolicus), this protein is dCTP deaminase, dUMP-forming.